Here is a 785-residue protein sequence, read N- to C-terminus: Terminal nucleotidyltransferase 4A (785 aa).

Positions 56-184 are disordered; that stretch reads AAGRAAPAAG…QFHPGRRKRE (129 aa). The span at 68–85 shows a compositional bias: pro residues; sequence GPAPAASSPPPAPGPAAL. 2 stretches are compositionally biased toward low complexity: residues 86-98 and 106-145; these read PPAL…PAAD and SPSL…AGSG. Aspartate 290 and aspartate 292 together coordinate Mg(2+). Residues glycine 353, lysine 378, serine 396, and tyrosine 397 each contribute to the ATP site. Residues 421–480 enclose the PAP-associated domain; it reads NLGMLLVEFFELYGRNFNYLKTGIRIKEGGAYIAKEEIMKAMTSGYRPSMLCIEDPLLPG. The ATP site is built by asparagine 481 and arginine 485. Over residues 593–611 the composition is skewed to low complexity; that stretch reads PQLLSSGSSASSVSSLSGS. Disordered regions lie at residues 593–625 and 731–785; these read PQLL…TPSV and KGSH…SLSR. Over residues 757 to 774 the composition is skewed to basic residues; that stretch reads RGHHQYNRTGWRRKKHAH.

It belongs to the DNA polymerase type-B-like family. Component of a nuclear TRAMP-like complex, an ATP-dependent exosome regulatory complex consisting of a helicase (MTREX), an oligadenylate polymerase (TENT4B or TENT4A), and a substrate specific RNA-binding factor (ZCCHC7 or ZCCHC8). Several TRAMP-like complexes exist with specific compositions and are associated with nuclear, or nucleolar RNA exosomes. It depends on Mg(2+) as a cofactor. Requires Mn(2+) as cofactor.

It is found in the cytoplasm. It localises to the nucleus. The protein resides in the nucleoplasm. The catalysed reaction is RNA(n) + ATP = RNA(n)-3'-adenine ribonucleotide + diphosphate. Its function is as follows. Terminal nucleotidyltransferase that catalyzes preferentially the transfer of ATP and GTP on RNA 3' poly(A) tail creating a heterogeneous 3' poly(A) tail leading to mRNAs stabilization by protecting mRNAs from active deadenylation. Also functions as a catalytic subunit of a TRAMP-like complex which has a poly(A) RNA polymerase activity and is involved in a post-transcriptional quality control mechanism. Polyadenylation with short oligo(A) tails is required for the degradative activity of the exosome on several of its nuclear RNA substrates. Has no terminal uridylyltransferase activity, and does not play a role in replication-dependent histone mRNA degradation via uridylation. This is Terminal nucleotidyltransferase 4A from Mus musculus (Mouse).